The chain runs to 607 residues: UvrABC system protein C (607 aa).

One can recognise a GIY-YIG domain in the interval 16–94 (GRPGVYRMFD…IKEWRPPYNI (79 aa)). A UVR domain is found at 203–238 (NALSEELSASMEKASMALEFERAAELRDQISMLRRV).

This sequence belongs to the UvrC family. Interacts with UvrB in an incision complex.

The protein localises to the cytoplasm. The UvrABC repair system catalyzes the recognition and processing of DNA lesions. UvrC both incises the 5' and 3' sides of the lesion. The N-terminal half is responsible for the 3' incision and the C-terminal half is responsible for the 5' incision. This Ectopseudomonas mendocina (strain ymp) (Pseudomonas mendocina) protein is UvrABC system protein C.